Reading from the N-terminus, the 147-residue chain is Large ribosomal subunit protein uL13 (147 aa).

It belongs to the universal ribosomal protein uL13 family. As to quaternary structure, part of the 50S ribosomal subunit.

In terms of biological role, this protein is one of the early assembly proteins of the 50S ribosomal subunit, although it is not seen to bind rRNA by itself. It is important during the early stages of 50S assembly. In Rhodococcus jostii (strain RHA1), this protein is Large ribosomal subunit protein uL13.